A 548-amino-acid chain; its full sequence is CTP synthase (548 aa).

Residues 1–267 (MKTKFIFITG…DQKIAIMLQL (267 aa)) form an amidoligase domain region. Residue S14 participates in CTP binding. S14 is a UTP binding site. ATP is bound by residues 15-20 (SLGKGL) and D72. Mg(2+) is bound by residues D72 and E141. CTP-binding positions include 148–150 (DIE), 188–193 (KTKPTQ), and K224. Residues 188 to 193 (KTKPTQ) and K224 contribute to the UTP site. The Glutamine amidotransferase type-1 domain maps to 292-545 (TIGIVGKYVD…IKAAGKQAVK (254 aa)). Residue G354 participates in L-glutamine binding. C381 functions as the Nucleophile; for glutamine hydrolysis in the catalytic mechanism. L-glutamine contacts are provided by residues 382 to 385 (LGMQ), E405, and R473. Catalysis depends on residues H518 and E520.

The protein belongs to the CTP synthase family. Homotetramer.

The catalysed reaction is UTP + L-glutamine + ATP + H2O = CTP + L-glutamate + ADP + phosphate + 2 H(+). It catalyses the reaction L-glutamine + H2O = L-glutamate + NH4(+). The enzyme catalyses UTP + NH4(+) + ATP = CTP + ADP + phosphate + 2 H(+). It participates in pyrimidine metabolism; CTP biosynthesis via de novo pathway; CTP from UDP: step 2/2. Its activity is regulated as follows. Allosterically activated by GTP, when glutamine is the substrate; GTP has no effect on the reaction when ammonia is the substrate. The allosteric effector GTP functions by stabilizing the protein conformation that binds the tetrahedral intermediate(s) formed during glutamine hydrolysis. Inhibited by the product CTP, via allosteric rather than competitive inhibition. Its function is as follows. Catalyzes the ATP-dependent amination of UTP to CTP with either L-glutamine or ammonia as the source of nitrogen. Regulates intracellular CTP levels through interactions with the four ribonucleotide triphosphates. This chain is CTP synthase, found in Oleidesulfovibrio alaskensis (strain ATCC BAA-1058 / DSM 17464 / G20) (Desulfovibrio alaskensis).